We begin with the raw amino-acid sequence, 363 residues long: Putative F-box protein At4g22170 (363 aa).

Residues 7–58 (PNSWSDLPHDLLNLVFERLSFANFNRARSVCSSWYSASRQSVPKNQIHWLIL) enclose the F-box domain.

The chain is Putative F-box protein At4g22170 from Arabidopsis thaliana (Mouse-ear cress).